The following is a 270-amino-acid chain: 3-methyl-2-oxobutanoate hydroxymethyltransferase (270 aa).

Mg(2+)-binding residues include Asp41 and Asp80. 3-methyl-2-oxobutanoate contacts are provided by residues 41 to 42 (DS), Asp80, and Lys109. Glu111 contacts Mg(2+). The active-site Proton acceptor is Glu178.

Belongs to the PanB family. As to quaternary structure, homodecamer; pentamer of dimers. Mg(2+) serves as cofactor.

It localises to the cytoplasm. It carries out the reaction 3-methyl-2-oxobutanoate + (6R)-5,10-methylene-5,6,7,8-tetrahydrofolate + H2O = 2-dehydropantoate + (6S)-5,6,7,8-tetrahydrofolate. It participates in cofactor biosynthesis; (R)-pantothenate biosynthesis; (R)-pantoate from 3-methyl-2-oxobutanoate: step 1/2. In terms of biological role, catalyzes the reversible reaction in which hydroxymethyl group from 5,10-methylenetetrahydrofolate is transferred onto alpha-ketoisovalerate to form ketopantoate. This Thermotoga neapolitana (strain ATCC 49049 / DSM 4359 / NBRC 107923 / NS-E) protein is 3-methyl-2-oxobutanoate hydroxymethyltransferase.